The chain runs to 1228 residues: Clustered mitochondria protein homolog (1228 aa).

The region spanning 298-557 is the Clu domain; the sequence is PSSLPSNSID…DNNPLDVGFA (260 aa). The TPR 1 repeat unit spans residues 486–519; that stretch reads CYGFDEASNKVIADAEFGSSLDDFAKVFHLKKHE. Residues 671-702 adopt a coiled-coil conformation; that stretch reads LGRVIELAEQELEAQRALREAHLQQVEADNKE. 2 TPR repeats span residues 982–1015 and 1108–1141; these read AESY…YERV and AVNE…FSKE.

The protein belongs to the CLU family. In terms of assembly, may associate with the eukaryotic translation initiation factor 3 (eIF-3) complex.

The protein resides in the cytoplasm. MRNA-binding protein involved in proper cytoplasmic distribution of mitochondria. The protein is Clustered mitochondria protein homolog of Eremothecium gossypii (strain ATCC 10895 / CBS 109.51 / FGSC 9923 / NRRL Y-1056) (Yeast).